Here is a 238-residue protein sequence, read N- to C-terminus: Purine nucleoside phosphorylase DeoD-type (238 aa).

Residue H4 coordinates a purine D-ribonucleoside. Residues G20, R24, R43, and R87 to S90 each bind phosphate. Residues E179–E181 and S203–D204 contribute to the a purine D-ribonucleoside site. The active-site Proton donor is D204.

It belongs to the PNP/UDP phosphorylase family. In terms of assembly, homohexamer; trimer of homodimers.

It carries out the reaction a purine D-ribonucleoside + phosphate = a purine nucleobase + alpha-D-ribose 1-phosphate. The catalysed reaction is a purine 2'-deoxy-D-ribonucleoside + phosphate = a purine nucleobase + 2-deoxy-alpha-D-ribose 1-phosphate. In terms of biological role, catalyzes the reversible phosphorolytic breakdown of the N-glycosidic bond in the beta-(deoxy)ribonucleoside molecules, with the formation of the corresponding free purine bases and pentose-1-phosphate. The sequence is that of Purine nucleoside phosphorylase DeoD-type from Haemophilus ducreyi (strain 35000HP / ATCC 700724).